The following is a 283-amino-acid chain: Alkaline ceramidase (283 aa).

Ca(2+) is bound by residues Asp28, Trp29, Glu31, Asn33, and Glu42. The next 2 membrane-spanning stretches (helical) occupy residues 43–63 (FVNT…IMLF) and 69–89 (FVTP…LSSM). His92 is a binding site for Zn(2+). The next 4 helical transmembrane spans lie at 98–118 (IGQL…FSLF), 134–151 (TFSW…GLSW), 154–174 (PIVN…MLYT), and 187–209 (LGIR…RIFC). Zn(2+)-binding residues include His221 and His225. Residues 222–242 (GFWHIFIFIAAYTVLVLFAYF) form a helical membrane-spanning segment.

Belongs to the alkaline ceramidase family. Requires Zn(2+) as cofactor. In terms of tissue distribution, expressed in the central midgut of late embryos. In brain, it is present at the interhemispheric junction and in groups of cells in the central brain.

The protein localises to the membrane. It catalyses the reaction an N-acylsphing-4-enine + H2O = sphing-4-enine + a fatty acid. In terms of biological role, hydrolyzes the sphingolipid ceramide into sphingosine and free fatty acid. The sequence is that of Alkaline ceramidase (bwa) from Drosophila melanogaster (Fruit fly).